We begin with the raw amino-acid sequence, 466 residues long: Asparagine--tRNA ligase (466 aa).

It belongs to the class-II aminoacyl-tRNA synthetase family. Homodimer.

It is found in the cytoplasm. The catalysed reaction is tRNA(Asn) + L-asparagine + ATP = L-asparaginyl-tRNA(Asn) + AMP + diphosphate + H(+). The protein is Asparagine--tRNA ligase of Wigglesworthia glossinidia brevipalpis.